A 931-amino-acid polypeptide reads, in one-letter code: Dual O-methyltransferase/FAD-dependent monooxygenase elcB (931 aa).

The O-methyltransferase stretch occupies residues 1-463 (MAASTGLSTV…TTDKARPNGD (463 aa)). Asp254 is a binding site for S-adenosyl-L-methionine. His304 serves as the catalytic Proton acceptor. A disordered region spans residues 455-474 (TDKARPNGDTTHSGQASIPN). Polar residues predominate over residues 462 to 474 (GDTTHSGQASIPN). The interval 464–931 (TTHSGQASIP…TFEELDVAEL (468 aa)) is FAD-dependent monooxygenase. FAD is bound by residues Glu520, Arg604, Asp836, and Ala849.

This sequence in the C-terminal section; belongs to the paxM FAD-dependent monooxygenase family. The protein in the N-terminal section; belongs to the class I-like SAM-binding methyltransferase superfamily. Cation-independent O-methyltransferase family. COMT subfamily.

It carries out the reaction nor-toralactone + S-adenosyl-L-methionine = toralactone + S-adenosyl-L-homocysteine + H(+). It catalyses the reaction toralactone + NADH + O2 + H(+) = 1-(3,4,5-trihydroxy-7-methoxynaphthalen-2-yl)propan-2-one + CO2 + NAD(+). Its pathway is secondary metabolite biosynthesis. Its function is as follows. Dual O-methyltransferase/FAD-dependent monooxygenase; part of the gene cluster that mediates the biosynthesis of elsinochrome C, a perelyenequinone phytotoxin structurally similar to cercosporin. The first step of elsinochrome C biosynthesis is performed by the polyketide synthase elcA which catalyzes the formation of nor-toralactone. The starter unit acyltransferase (SAT) domain of elcA initiates polyketide extension by the selective utilization of acetyl-CoA, which is elongated to the heptaketide in the beta-ketoacyl synthase (KS) domain by successive condensations with six malonyl units introduced by the malonyl acyltransferase (MAT) domain. The product template (PT) domain catalyzes C4-C9 and C2-C11 aldol cyclizations and dehydrations to a trihydroxynaphthalene, which is thought to be delivered to the thioesterase (TE) domain for product release. The bifunctional enzyme elcB then methylates nor-toralactone to toralactone before conducting an unusual oxidative aromatic ring opening. The next step in perylenequinone biosynthesis is an O-methylation at the nascent OH-6 of the elcB product performed by the O-methyltransferase elcD. The oxidative coupling of the two monomeric naphthol units in perylenequinone biosynthesis is catalyzed by the FAD-dependent monooxygenase elcE and the multicopper oxidase elcG. ElcG might catalyze the first intermolecular coupling in a regio- and stereo-selective manner via a phenol radical coupling mechanism and the elcE could forge the second C-C bond intramolecularly via a hydride transfer mechanism. The fasciclin domain-containing protein elcF might also play a role duting this step. The last piece of the puzzle in the biosynthesis of elsinochrome C is the additional annulation by enolate coupling to afford the dihydrobenzo(ghi)perylenequinone system, catalyzed by the FAD-dependent monooxygenase elcH. This is Dual O-methyltransferase/FAD-dependent monooxygenase elcB from Phaeosphaeria nodorum (strain SN15 / ATCC MYA-4574 / FGSC 10173) (Glume blotch fungus).